Here is a 317-residue protein sequence, read N- to C-terminus: MTCKIIGSGGYLPQKIISNDELTKFVDTNDKWIRTRTGIFQRHIAGDTEYTSHLALKSAQKAIEDAMISVDDIDLIITCTTTPDNSFPSVATKLHGYLGLTNIPSFDLQAVCAGFIYGLQLTNSLIVSGKYKTILLIGAEKMTSLLDWNDRSTCVLFGDGAGSVILQRSNDESGLIDSNIFSSGTDYEILYTSGGTSMNGTSGKIVMQGQKLFRHAIAKMLQSIEDLLHANQFSVSDIDYFIPHQANIRIINKLAELLNIEEHKVVKTVEKHANCSAASIPLALSTLKESGKIKKGDILLFSAIGAGLTWGSALIRW.

Catalysis depends on residues Cys112 and His244. The segment at 245–249 (QANIR) is ACP-binding. Residue Asn274 is part of the active site.

Belongs to the thiolase-like superfamily. FabH family. In terms of assembly, homodimer.

The protein resides in the cytoplasm. It carries out the reaction malonyl-[ACP] + acetyl-CoA + H(+) = 3-oxobutanoyl-[ACP] + CO2 + CoA. Its pathway is lipid metabolism; fatty acid biosynthesis. Catalyzes the condensation reaction of fatty acid synthesis by the addition to an acyl acceptor of two carbons from malonyl-ACP. Catalyzes the first condensation reaction which initiates fatty acid synthesis and may therefore play a role in governing the total rate of fatty acid production. Possesses both acetoacetyl-ACP synthase and acetyl transacylase activities. Its substrate specificity determines the biosynthesis of branched-chain and/or straight-chain of fatty acids. This chain is Beta-ketoacyl-[acyl-carrier-protein] synthase III, found in Rickettsia typhi (strain ATCC VR-144 / Wilmington).